A 461-amino-acid polypeptide reads, in one-letter code: Steroidogenic factor 1 (461 aa).

The nuclear receptor DNA-binding region spans 10–85; it reads DELCPVCGDK…VGMRLEAVRA (76 aa). The NR C4-type zinc finger occupies 13–33; that stretch reads CPVCGDKVSGYHYGLLTCESC. An N6-acetyllysine mark is found at lysine 34, lysine 38, and lysine 72. The segment at 49–73 adopts an NR C4-type zinc-finger fold; that stretch reads CTESQSCKIDKTLRKRCPFCRFQKC. Lysine 119 is covalently cross-linked (Glycyl lysine isopeptide (Lys-Gly) (interchain with G-Cter in SUMO)). Positions 119-153 are disordered; it reads KLETGPPMGVPPPPPPPPDYMLPPGLHVPEPKGLA. Positions 126-139 are enriched in pro residues; sequence MGVPPPPPPPPDYM. Lysine 194 participates in a covalent cross-link: Glycyl lysine isopeptide (Lys-Gly) (interchain with G-Cter in SUMO). Position 203 is a phosphoserine; by CDK7 (serine 203). One can recognise an NR LBD domain in the interval 222 to 459; sequence GVPELILQLL…NLLIEMLQAK (238 aa). Glycine 341, tyrosine 436, and lysine 440 together coordinate a 1,2-diacyl-sn-glycero-3-phosphocholine.

Belongs to the nuclear hormone receptor family. NR5 subfamily. As to quaternary structure, binds DNA as a monomer. Part of a complex consisting of SFPQ, NONO and NR5A1. Interacts with NR0B2. Interacts with DGKQ and CDK7. Binds to and activated by HIPK3. In terms of processing, acetylation stimulates the transcriptional activity. Sumoylation reduces CDK7-mediated phosphorylation on Ser-203. Post-translationally, phosphorylated on Ser-203 by CDK7. This phosphorylation promotes transcriptional activity.

It localises to the nucleus. Transcriptional activator. Seems to be essential for sexual differentiation and formation of the primary steroidogenic tissues. Binds to the Ad4 site found in the promoter region of steroidogenic P450 genes such as CYP11A, CYP11B and CYP21B. Also regulates the AMH/Muellerian inhibiting substance gene as well as the AHCH and STAR genes. 5'-YCAAGGYC-3' and 5'-RRAGGTCA-3' are the consensus sequences for the recognition by NR5A1. The SFPQ-NONO-NR5A1 complex binds to the CYP17 promoter and regulates basal and cAMP-dependent transcriptional activity. Binds phospholipids with a phosphatidylinositol (PI) headgroup, in particular PI(3,4)P2 and PI(3,4,5)P3. Activated by the phosphorylation of NR5A1 by HIPK3 leading to increased steroidogenic gene expression upon cAMP signaling pathway stimulation. The polypeptide is Steroidogenic factor 1 (NR5A1) (Equus caballus (Horse)).